The primary structure comprises 543 residues: Pectate disaccharide-lyase (543 aa).

It belongs to the polysaccharide lyase 2 family. Cu cation is required as a cofactor. Requires Mn(2+) as cofactor. The cofactor is Ni(2+).

It localises to the cytoplasm. The enzyme catalyses [(1-&gt;4)-alpha-D-galacturonosyl](n) = 4-(4-deoxy-alpha-D-galact-4-enuronosyl)-D-galacturonate + [(1-&gt;4)-alpha-D-galacturonosyl](n-2). The protein operates within glycan metabolism; pectin degradation. In terms of biological role, catalyzes the formation of unsaturated digalacturonates from polygalacturonate or short oligogalacturonates. The polypeptide is Pectate disaccharide-lyase (pelW) (Dickeya dadantii (strain 3937) (Erwinia chrysanthemi (strain 3937))).